The sequence spans 519 residues: Cell adhesion molecule CEACAM1 (519 aa).

The first 34 residues, 1-34, serve as a signal peptide directing secretion; it reads MELASARLLRGQIPWRGLLLTASLLTYWSPLTTA. Residue Q35 is modified to Pyrrolidone carboxylic acid. Over 35–425 the chain is Extracellular; the sequence is QVTVDAVPPN…QGNSGLSEGA (391 aa). Positions 39 to 142 are required for homophilic binding; it reads DAVPPNVVEE…QTSVQFRVYP (104 aa). The Ig-like V-type domain occupies 42 to 140; that stretch reads PPNVVEEKSV…PIQTSVQFRV (99 aa). N-linked (GlcNAc...) asparagine glycosylation is found at N87, N104, N113, N148, N152, N173, N197, N224, N256, N288, N292, N302, N315, and N331. Ig-like C2-type domains lie at 147–232, 237–317, and 325–403; these read PNVT…FNLD, PDAP…KNIT, and PSIQ…FRIS. C167 and C215 are joined by a disulfide. C259 and C299 are disulfide-bonded. A disulfide bridge connects residues C344 and C392. A glycan (N-linked (GlcNAc...) asparagine; atypical) is linked at N374. The helical transmembrane segment at 426 to 446 threads the bilayer; it reads IAGIVIGSVAGVALIAALAYF. The segment at 445–457 is interaction with calmodulin; that stretch reads YFLYSRKTGGGSD. Over 447 to 519 the chain is Cytoplasmic; it reads LYSRKTGGGS…ETVYSVVKKK (73 aa). Positions 447–519 are interaction with FLNA; that stretch reads LYSRKTGGGS…ETVYSVVKKK (73 aa). The disordered stretch occupies residues 455–519; that stretch reads GSDHRDLTEH…ETVYSVVKKK (65 aa). Over residues 456–466 the composition is skewed to basic and acidic residues; sequence SDHRDLTEHKP. A required for interaction with PTPN11 and PTPN6 and for control of phosphorylation level region spans residues 484–519; the sequence is DDVSYSVLNFNAQQSKRPTSASSSPTETVYSVVKKK. Y488 is modified (phosphotyrosine; by SRC, LCK, INSR and EGFR). Residues 489-512 are compositionally biased toward polar residues; the sequence is SVLNFNAQQSKRPTSASSSPTETV. S503 is subject to Phosphoserine. Y513 carries the phosphotyrosine; by INSR, SRC and LCK modification. An essential for interaction with PTPN11 and PTPN6 region spans residues 513-516; it reads YSVV.

This sequence belongs to the immunoglobulin superfamily. CEA family. As to quaternary structure, monomer. Oligomer. Heterodimer. Homodimer. Cis-dimer/oligomer (via Ig-like C2-type and/or via cytoplasmic domains); induced by trans-homophilic cell adhesion through an allosteric mechanism transmitted by the Ig-like V-type domain, and is regulated by intracellular calcium and calmodulin. Interacts (via cytoplasmic domain) with calmodulin in a calcium dependent manner; reduces homophilic cell adhesion through dissociation of dimer. Isoform 1 interacts (via cytoplasmic domain) with PTPN11 (preferentially) and PTPN6; cis-homodimer form is preferred; this interaction is decreased by formation of isoform 1 / isoform 2 cis-heterodimers and is dependent on the monomer/dimer equilibrium; this interaction is phosphorylation-dependent. Isoform 1 interacts with LYN. Isoform 1 interacts (via cytoplasmic domain) with SRC (via SH2 domain); this interaction is regulated by trans-homophilic cell adhesion. Isoform 1 interacts (via cytoplasmic domain) with LCK; mediates phosphorylation at Tyr-488 and Tyr-513 resulting in PTPN6 association. Isoform 1 interacts with PTPN6; this interaction is phosphorylation-dependent and causes a profound decrease in TCR stimulation-induced CD247 and ZAP70 phosphorylation. Isoform 1 interacts with TCR/CD3 complex through TCR beta chain and CD3E; colocalizes at the cell surface and upon stimulation of the TCR/CD3 complex recruits PTPN6 in the TCR/CD3 complex, resulting in dephosphorylation of CD247 and ZAP70. Isoform 1 interacts (via cytoplasmic domain) with SHC1 (via SH2 domain); SHC1 mediates interaction with INSR or EGFR in a Ser-503 phosphorylation-dependent manner. Isoform 1 interacts with EGFR; the interaction is indirect. Isoform 1 interacts with CSF3R; down-regulates the CSF3R-STAT3 pathway through recruitment of PTPN6 that dephosphorylates CSF3R. Isoform 1 (phosphorylated form) interacts with TLR4 and SYK; recruits PTPN6 that dephosphorylates SYK, reducing the production of reactive oxygen species (ROS) and lysosome disruption, leading to a reduction of the inflammasome activity. Isoform 1 interacts with FLNA; inhibits cell migration and cell scattering by interfering with the interaction of FLNA with RALA. Isoform 1 interacts (via cytoplasmic domain) with PXN; the interaction is phosphotyrosyl-dependent. Isoform 1 interacts with KLRK1; recruits PTPN6 that dephosphorylates VAV1. Isoform 1 interacts with CEACAM8. Isoform 1 interacts with FASN; this interaction is insulin and phosphorylation-dependent; reduces fatty-acid synthase activity. Interacts (via Ig-like V-type) with HAVCR2 (via Ig-like V-type); facilitates the maturation and cell surface expression of HAVCR2 thereby regulating T-cell tolerance induction. Isoform 2 interacts (via the cytoplasmic domain) with ANXA2; this interaction is regulated by phosphorylation and appears in the AIIt complex. Interacts (via Lewis X moieties) with CD209 (via C-type lectin domain); this interaction is regulated by the glycosylation pattern of CEACAM1 on cell types and regulates contact between dendritic cells and neutrophils. In terms of processing, phosphorylated on serine and tyrosine. Isoform 1 is phosphorylated on tyrosine by Src family kinases like SRC and LCK and by receptor like CSF3R, EGFR and INSR upon stimulation. Phosphorylated at Ser-503; mediates activity. Phosphorylated at Tyr-488; regulates activity. Phosphorylated at Tyr-488 by EGFR and INSR upon stimulation; this phosphorylation is Ser-503-phosphorylation-dependent; mediates cellular internalization; increases interaction with FASN. Phosphorylated at Tyr-488 and Tyr-513 by LCK; mediates PTPN6 association and is regulated by homophilic ligation of CEACAM1 in the absence of T-cell activation. Phosphorylated at Tyr-513; mediates interaction with PTPN11. Post-translationally, phosphorylated on serine and threonine. In terms of tissue distribution, expressed in epithelia, vessel endothelia, leukocytes and platelets. Isoform 1 and isoform 2 are highly expressed in liver and intestine, moderately in lung, and weakly in muscle, kidney, and spleen. Expressed in granulocytes, lymphocytes, granulocytes, B cells, and T-cells.

The protein localises to the cell membrane. Its subcellular location is the lateral cell membrane. The protein resides in the apical cell membrane. It is found in the basal cell membrane. It localises to the cell junction. The protein localises to the adherens junction. Its subcellular location is the cytoplasmic vesicle. The protein resides in the secretory vesicle. It is found in the cell projection. It localises to the microvillus membrane. Cell adhesion protein that mediates homophilic cell adhesion in a calcium-independent manner. Plays a role as coinhibitory receptor in immune response, insulin action and also functions as an activator during angiogenesis. Its coinhibitory receptor function is phosphorylation- and PTPN6 -dependent, which in turn, suppress signal transduction of associated receptors by dephosphorylation of their downstream effectors. Plays a role in immune response, of T-cells, natural killer (NK) and neutrophils. Upon TCR/CD3 complex stimulation, inhibits TCR-mediated cytotoxicity by blocking granule exocytosis by mediating homophilic binding to adjacent cells, allowing interaction with and phosphorylation by LCK and interaction with the TCR/CD3 complex which recruits PTPN6 resulting in dephosphorylation of CD247 and ZAP70. Also inhibits T-cell proliferation and cytokine production through inhibition of JNK cascade and plays a crucial role in regulating autoimmunity and anti-tumor immunity by inhibiting T-cell through its interaction with HAVCR2. Upon natural killer (NK) cells activation, inhibit KLRK1-mediated cytolysis of CEACAM1-bearing tumor cells by trans-homophilic interactions with CEACAM1 on the target cell and lead to cis-interaction between CEACAM1 and KLRK1, allowing PTPN6 recruitment and then VAV1 dephosphorylation. Upon neutrophils activation negatively regulates IL1B production by recruiting PTPN6 to a SYK-TLR4-CEACAM1 complex, that dephosphorylates SYK, reducing the production of reactive oxygen species (ROS) and lysosome disruption, which in turn, reduces the activity of the inflammasome. Down-regulates neutrophil production by acting as a coinhibitory receptor for CSF3R by downregulating the CSF3R-STAT3 pathway through recruitment of PTPN6 that dephosphorylates CSF3R. Also regulates insulin action by promoting INS clearance and regulating lipogenesis in liver through regulating insulin signaling. Upon INS stimulation, undergoes phosphorylation by INSR leading to INS clearance by increasing receptor-mediated insulin endocytosis. This inernalization promotes interaction with FASN leading to receptor-mediated insulin degradation and to reduction of FASN activity leading to negative regulation of fatty acid synthesis. INSR-mediated phosphorylation also provokes a down-regulation of cell proliferation through SHC1 interaction resulting in decrease coupling of SHC1 to the MAPK3/ERK1-MAPK1/ERK2 and phosphatidylinositol 3-kinase pathways. Functions as activator in angiogenesis by promoting blood vessel remodeling through endothelial cell differentiation and migration and in arteriogenesis by increasing the number of collateral arteries and collateral vessel calibers after ischemia. Also regulates vascular permeability through the VEGFR2 signaling pathway resulting in control of nitric oxide production. Down-regulates cell growth in response to EGF through its interaction with SHC1 that mediates interaction with EGFR resulting in decrease coupling of SHC1 to the MAPK3/ERK1-MAPK1/ERK2 pathway. Negatively regulates platelet aggregation by decreasing platelet adhesion on type I collagen through the GPVI-FcRgamma complex. Inhibits cell migration and cell scattering through interaction with FLNA; interferes with the interaction of FLNA with RALA. Mediates bile acid transport activity in a phosphorylation dependent manner. Negatively regulates osteoclastogenesis. Functionally, cell adhesion proteins that mediates homophilic cell adhesion in a calcium-independent manner. Promotes populations of T-cells regulating IgA production and secretion associated with control of the commensal microbiota and resistance to enteropathogens. The sequence is that of Cell adhesion molecule CEACAM1 from Rattus norvegicus (Rat).